Here is a 356-residue protein sequence, read N- to C-terminus: Activating signal cointegrator 1 complex subunit 1 (356 aa).

The tract at residues 1-52 (MDVLRPQIVTFDGRNYRKNPIQEKQYQHEEDEDFYPDSMEYSDEPCGAYEVA) is required for interaction with ASCC3. One can recognise a KH domain in the interval 57–119 (GFRATVSAPS…NGVVSARTRI (63 aa)).

As to quaternary structure, identified in the ASCC complex that contains ASCC1, ASCC2 and ASCC3. Interacts directly with ASCC3. The ASCC complex interacts with ALKBH3. Part of the ASC-1 complex, that contains TRIP4, ASCC1, ASCC2 and ASCC3. Interacts with CSRP1. Interacts with ZCCHC4. In terms of tissue distribution, expressed in the spinal cord, brain, paraspinal ganglia, thyroid, and submandibular glands.

It is found in the nucleus. It localises to the nucleus speckle. In terms of biological role, plays a role in DNA damage repair as component of the ASCC complex. Part of the ASC-1 complex that enhances NF-kappa-B, SRF and AP1 transactivation. In cells responding to gastrin-activated paracrine signals, it is involved in the induction of SERPINB2 expression by gastrin. May also play a role in the development of neuromuscular junction. The chain is Activating signal cointegrator 1 complex subunit 1 (Ascc1) from Mus musculus (Mouse).